A 293-amino-acid polypeptide reads, in one-letter code: Cbb3-type cytochrome c oxidase subunit FixP (293 aa).

Positions 1–11 (MSTSHESHHAP) are enriched in basic and acidic residues. The tract at residues 1–25 (MSTSHESHHAPVDGAGGPSTTGHEW) is disordered. Residues 43-63 (FYATIIWAFGYWVAYPAWPLV) form a helical membrane-spanning segment. 2 consecutive Cytochrome c domains span residues 114 to 201 (LARA…RSLS) and 209 to 290 (PAAK…HTLG). Heme c-binding residues include Cys127, Cys130, His131, Met178, Cys222, Cys225, His226, and Met267.

This sequence belongs to the CcoP / FixP family. In terms of assembly, component of the cbb3-type cytochrome c oxidase at least composed of FixN, FixO, FixQ and FixP. Heme c serves as cofactor.

It localises to the cell inner membrane. It participates in energy metabolism; oxidative phosphorylation. In terms of biological role, C-type cytochrome. Part of the cbb3-type cytochrome c oxidase complex. FixP subunit is required for transferring electrons from donor cytochrome c via its heme groups to FixO subunit. From there, electrons are shuttled to the catalytic binuclear center of FixN subunit where oxygen reduction takes place. The complex also functions as a proton pump. The protein is Cbb3-type cytochrome c oxidase subunit FixP of Azorhizobium caulinodans (strain ATCC 43989 / DSM 5975 / JCM 20966 / LMG 6465 / NBRC 14845 / NCIMB 13405 / ORS 571).